The chain runs to 184 residues: GTP-binding protein Rheb (184 aa).

Residue Lys8 forms a Glycyl lysine isopeptide (Lys-Gly) (interchain with G-Cter in ubiquitin) linkage. GDP-binding residues include Ser16 and Val17. Ser16 lines the GTP pocket. Residues Gly18, Lys19, Ser20, Ser21, Val32, Tyr35, Thr38, Asn119, and Asp122 each coordinate GTP. GDP contacts are provided by Lys19, Ser20, and Ser21. Residue Ser20 participates in Mg(2+) binding. Residues 35 to 43 carry the Effector region motif; sequence YDPTIENTF. Residue Thr38 coordinates GDP. Residue Thr38 participates in Mg(2+) binding. Residue Asp122 participates in GDP binding. The residue at position 130 (Ser130) is a Phosphoserine; by MAPKAPK5. Ala150 provides a ligand contact to GDP. Position 150 (Ala150) interacts with GTP. The residue at position 181 (Cys181) is a Cysteine methyl ester. Cys181 carries the S-farnesyl cysteine lipid modification. Residues 182-184 constitute a propeptide, removed in mature form; that stretch reads SVM.

This sequence belongs to the small GTPase superfamily. Rheb family. As to quaternary structure, associates with the mTORC1 complex (MTOR, MLST8 and RPTOR) in a guanyl nucleotide-independent manner. Interacts with TSC2. Interacts with MCRS1; the interaction maintains RHEB at the lysosome in its active GTP-bound form and prevents its interaction with the mTORC1 complex inhibitor TSC2, ensuring activation of the mTORC1 complex by RHEB. Interacts (when prenylated) with PDE6D; this promotes release from membranes. Farnesylation is important for efficiently activating mTORC1-mediated signaling. Post-translationally, polyubiquitinated in response to amino acid, promoting its interaction with MTOR and mTORC1 activation. Deubiquitination by ATXN3 promotes recruitment of the TSC-TBC complex and RHEB inactivation by TSC2. Monoubiquitinated at Lys-8 by RNF152, promoting its association with the TSC-TBC complex. Deubiquitinated at Lys-8 by USP4, promoting mTORC1 activation. In terms of processing, phosphorylation by MAPKAPK5 impairs GTP-binding and inactivation. As to expression, expressed at high levels in normal adult cortex as well as a number of peripheral tissues, including lung and intestine.

The protein resides in the endomembrane system. Its subcellular location is the lysosome membrane. The protein localises to the golgi apparatus membrane. It localises to the endoplasmic reticulum membrane. It is found in the cytoplasm. The protein resides in the cytosol. The enzyme catalyses GTP + H2O = GDP + phosphate + H(+). Its activity is regulated as follows. Alternates between an inactive form bound to GDP and an active form bound to GTP. Inactivated by the TSC-TBC complex via the GTPase activating protein (GAP) domain of TSC2. Autoinhibited by Tyr-35, which constrains the active site conformation, restricting the access of the catalytic Asp-65 to the nucleotide-binding pocket. Functionally, small GTPase that acts as an allosteric activator of the canonical mTORC1 complex, an evolutionarily conserved central nutrient sensor that stimulates anabolic reactions and macromolecule biosynthesis to promote cellular biomass generation and growth. In response to nutrients, growth factors or amino acids, specifically activates the protein kinase activity of MTOR, the catalytic component of the mTORC1 complex: acts by causing a conformational change that allows the alignment of residues in the active site of MTOR, thereby enhancing the phosphorylation of ribosomal protein S6 kinase (RPS6KB1 and RPS6KB2) and EIF4EBP1 (4E-BP1). RHEB is also required for localization of the TSC-TBC complex to lysosomal membranes. In response to starvation, RHEB is inactivated by the TSC-TBC complex, preventing activation of mTORC1. Has low intrinsic GTPase activity. In Rattus norvegicus (Rat), this protein is GTP-binding protein Rheb.